We begin with the raw amino-acid sequence, 107 residues long: MLKSNLKIENRLSLIGVTESVKRSKSPNGIEHCRIWLEHRSEQQEAGLIRQARCKMPIQISGHQLIHKTQGITVGSKILVVGFITSHKQTNGLNQLVLHAEHIELLD.

One can recognise an SSB domain in the interval 8-107 (IENRLSLIGV…LHAEHIELLD (100 aa)).

The protein belongs to the PriB family. Homodimer. Interacts with PriA and DnaT. Component of the replication restart primosome. Primosome assembly occurs via a 'hand-off' mechanism. PriA binds to replication forks, subsequently PriB then DnaT bind; DnaT then displaces ssDNA to generate the helicase loading substrate.

Its function is as follows. Involved in the restart of stalled replication forks, which reloads the replicative helicase on sites other than the origin of replication; the PriA-PriB pathway is the major replication restart pathway. During primosome assembly it facilitates complex formation between PriA and DnaT on DNA; stabilizes PriA on DNA. Stimulates the DNA unwinding activity of PriA helicase. The sequence is that of Replication restart protein PriB from Actinobacillus succinogenes (strain ATCC 55618 / DSM 22257 / CCUG 43843 / 130Z).